The primary structure comprises 407 residues: Protein S-acyltransferase 8 (407 aa).

Transmembrane regions (helical) follow at residues 29 to 49 and 62 to 82; these read SLPLTLLLIIVPVVLFCVFVA and GYAIMVVAILFTIYVLILLFF. Residues 136-186 enclose the DHHC domain; it reads KYCDTCMLYRPPRCSHCSICNNCVERFDHHCPWVGQCIGLRNYRYFFMFVS. Cys-166 acts as the S-palmitoyl cysteine intermediate in catalysis. 2 consecutive transmembrane segments (helical) span residues 181-201 and 224-244; these read FFMFVSSSTLLCIYIFSMSAV and AVVLMIYCFIALWFVGGLTAF. The disordered stretch occupies residues 348–368; sequence AEDANNNQPHHTLDIDHERAG. Basic and acidic residues predominate over residues 358-368; it reads HTLDIDHERAG. Position 385 is a phosphoserine (Ser-385).

This sequence belongs to the DHHC palmitoyltransferase family. In terms of tissue distribution, expressed in flowers and pollen.

The protein resides in the cell membrane. It catalyses the reaction L-cysteinyl-[protein] + hexadecanoyl-CoA = S-hexadecanoyl-L-cysteinyl-[protein] + CoA. In terms of biological role, S-acyltransferase involved in protein lipid modification. This is Protein S-acyltransferase 8 (PAT08) from Arabidopsis thaliana (Mouse-ear cress).